The following is a 269-amino-acid chain: Flagellar brake protein YcgR (269 aa).

A disordered region spans residues 1-42; that stretch reads MLREPMNQHDAPGPAETGADSDAETDAETDAETDAGAADDRY. Over residues 19–33 the composition is skewed to acidic residues; the sequence is ADSDAETDAETDAET. Positions 149–261 constitute a PilZ domain; that stretch reads QRRRHFRART…MENFLQRLVF (113 aa).

This sequence belongs to the YcgR family. As to quaternary structure, monomer. Interacts with the flagellar basal bodies.

It localises to the bacterial flagellum basal body. In terms of biological role, acts as a flagellar brake, regulating swimming and swarming in a bis-(3'-5') cyclic diguanylic acid (c-di-GMP)-dependent manner. Binds 1 c-di-GMP dimer per subunit. Increasing levels of c-di-GMP lead to decreased motility. The polypeptide is Flagellar brake protein YcgR (Cupriavidus taiwanensis (strain DSM 17343 / BCRC 17206 / CCUG 44338 / CIP 107171 / LMG 19424 / R1) (Ralstonia taiwanensis (strain LMG 19424))).